Consider the following 207-residue polypeptide: Ribonuclease HII (207 aa).

Positions 12–201 (ALVAGVDEVG…VRELLDVVSI (190 aa)) constitute an RNase H type-2 domain. A divalent metal cation contacts are provided by Asp-18, Glu-19, and Asp-110.

This sequence belongs to the RNase HII family. It depends on Mn(2+) as a cofactor. Mg(2+) serves as cofactor.

The protein resides in the cytoplasm. It catalyses the reaction Endonucleolytic cleavage to 5'-phosphomonoester.. In terms of biological role, endonuclease that specifically degrades the RNA of RNA-DNA hybrids. The polypeptide is Ribonuclease HII (Azotobacter vinelandii (strain DJ / ATCC BAA-1303)).